The following is a 562-amino-acid chain: Phosphatidylinositol 4-phosphate 5-kinase type-1 alpha (562 aa).

Residues 81–449 (TSSALKGAIQ…RFQRFMCNTV (369 aa)) enclose the PIPK domain. Lysine 103 participates in a covalent cross-link: Glycyl lysine isopeptide (Lys-Gly) (interchain with G-Cter in ubiquitin). Serine 486 bears the Phosphoserine mark. Positions 506-526 (HLGRPDVLPQTPPLEEISEGS) are disordered.

Interacts with RAC1. Interacts with TUT1. Forms a complex with CDH1/E-cadherin, CTNNB1/beta-catenin and CTNND1 at the plasma membrane upon calcium stimulation. Found in a ternary complex with IRS1 and DGKZ in the absence of insulin stimulation. Interacts with DGKZ. Interacts with PIP4K2C; the interaction inhibits PIP5K1A kinase activity. In terms of tissue distribution, highly expressed in heart, placenta, skeletal muscle, kidney and pancreas. Detected at lower levels in brain, lung and liver.

It localises to the cell membrane. The protein localises to the cytoplasm. Its subcellular location is the nucleus. It is found in the nucleus speckle. The protein resides in the cell projection. It localises to the ruffle. The protein localises to the lamellipodium. The catalysed reaction is a 1,2-diacyl-sn-glycero-3-phospho-(1D-myo-inositol 4-phosphate) + ATP = a 1,2-diacyl-sn-glycero-3-phospho-(1D-myo-inositol-4,5-bisphosphate) + ADP + H(+). It carries out the reaction 1-octadecanoyl-2-(5Z,8Z,11Z,14Z)-eicosatetraenoyl-sn-glycero-3-phospho-1D-myo-inositol 4-phosphate + ATP = 1-octadecanoyl-2-(5Z,8Z,11Z,14Z)-eicosatetraenoyl-sn-glycero-3-phospho-1D-myo-inositol 4,5-bisphosphate + ADP + H(+). It catalyses the reaction 1,2-dihexadecanoyl-sn-glycero-3-phospho-(1D-myo-inositol-4-phosphate) + ATP = 1,2-dihexadecanoyl-sn-glycero-3-phospho-(1D-myo-inositol-4,5-bisphosphate) + ADP + H(+). The enzyme catalyses 1-octadecanoyl-2-(9Z)-octadecenoyl-sn-glycero-3-phospho-1D-myo-inositol 4-phosphate + ATP = 1-octadecanoyl-2-(9Z)-octadecenoyl-sn-glycero-3-phospho-1D-myo-inositol 4,5-bisphosphate + ADP + H(+). The catalysed reaction is 1-octadecanoyl-2-(9Z)-octadecenoyl-sn-glycero-3-phospho-1D-myo-inositol + ATP = 1-octadecanoyl-2-(9Z)-octadecenoyl-sn-glycero-3-phospho-1D-myo-inositol 5-phosphate + ADP + H(+). It carries out the reaction 1-octadecanoyl-2-(9Z,12Z)-octadecadienoyl-sn-glycero-3-phospho-1D-myo-inositol + ATP = 1-octadecanoyl-2-(9Z,12Z)-octadecadienoyl-sn-glycero-3-phospho-1D-myo-inositol 5-phosphate + ADP + H(+). It catalyses the reaction 1-octadecanoyl-2-(5Z,8Z,11Z,14Z-eicosatetraenoyl)-sn-glycero-3-phospho-(1D-myo-inositol) + ATP = 1-octadecanoyl-2-(5Z,8Z,11Z,14Z)-eicosatetraenoyl-sn-glycero-3-phospho-1D-myo-inositol 5-phosphate + ADP + H(+). The enzyme catalyses 1,2-di-(9Z,12Z)-octadecadienoyl-sn-glycero-3-phospho-1D-myo-inositol + ATP = 1,2-di(9Z,12Z)-octadecadienoyl-sn-glycero-3-phospho-1D-myo-inositol 5-phosphate + ADP + H(+). Its activity is regulated as follows. Activated by diarachidonoyl phosphatidic acid (DAPA), when 1,2-dipalmitoyl-PI4P is used as a substrate. Catalyzes the phosphorylation of phosphatidylinositol 4-phosphate (PtdIns(4)P/PI4P) to form phosphatidylinositol 4,5-bisphosphate (PtdIns(4,5)P2/PIP2), a lipid second messenger that regulates several cellular processes such as signal transduction, vesicle trafficking, actin cytoskeleton dynamics, cell adhesion, and cell motility. PtdIns(4,5)P2 can directly act as a second messenger or can be utilized as a precursor to generate other second messengers: inositol 1,4,5-trisphosphate (IP3), diacylglycerol (DAG) or phosphatidylinositol-3,4,5-trisphosphate (PtdIns(3,4,5)P3/PIP3). PIP5K1A-mediated phosphorylation of PtdIns(4)P is the predominant pathway for PtdIns(4,5)P2 synthesis. Can also use phosphatidylinositol (PtdIns) as substrate in vitro. Together with PIP5K1C, is required for phagocytosis, both enzymes regulating different types of actin remodeling at sequential steps. Promotes particle ingestion by activating the WAS GTPase-binding protein that induces Arp2/3 dependent actin polymerization at the nascent phagocytic cup. Together with PIP5K1B, is required, after stimulation by G-protein coupled receptors, for the synthesis of IP3 that will induce stable platelet adhesion. Recruited to the plasma membrane by the E-cadherin/beta-catenin complex where it provides the substrate PtdIns(4,5)P2 for the production of PtdIns(3,4,5)P3, IP3 and DAG, that will mobilize internal calcium and drive keratinocyte differentiation. Positively regulates insulin-induced translocation of SLC2A4 to the cell membrane in adipocytes. Together with PIP5K1C has a role during embryogenesis. Independently of its catalytic activity, is required for membrane ruffling formation, actin organization and focal adhesion formation during directional cell migration by controlling integrin-induced translocation of the small GTPase RAC1 to the plasma membrane. Also functions in the nucleus where it acts as an activator of TUT1 adenylyltransferase activity in nuclear speckles, thereby regulating mRNA polyadenylation of a select set of mRNAs. The polypeptide is Phosphatidylinositol 4-phosphate 5-kinase type-1 alpha (Homo sapiens (Human)).